The following is a 307-amino-acid chain: MLRVVEGIFIFVVISEXVFGVLGNGFIGLVNCIDCAKNKLSTIGFILTGLAISRIFLIWIIITDGFIQIFSPDIYASGNLIEYISYFWVIGNQSSMWFATSLSIFYFLKIANFSNYIFLWLKSRTNMVLPFMIVFLLISSLLNFAHIAKILNDYKMKNDTVWDLNMYKSEYFIKQILLNLGVIFFFTLSLITCVFLIISLWRHNRQMQSNVTGLRDSNTEAHVKAMKVLISFXILFILYFIGMAIEISCFTVRENKLLLMFGMTTTAIYPWGHSFILILGNSKLKQASLRVLQQLKCCEKRKNLRVT.

Residues 1–6 (MLRVVE) are Extracellular-facing. A helical transmembrane segment spans residues 7–27 (GIFIFVVISEXVFGVLGNGFI). At 28–42 (GLVNCIDCAKNKLST) the chain is on the cytoplasmic side. Residues 43–63 (IGFILTGLAISRIFLIWIIIT) traverse the membrane as a helical segment. At 64-100 (DGFIQIFSPDIYASGNLIEYISYFWVIGNQSSMWFAT) the chain is on the extracellular side. Residue N92 is glycosylated (N-linked (GlcNAc...) asparagine). Residues 101 to 121 (SLSIFYFLKIANFSNYIFLWL) form a helical membrane-spanning segment. Residues 122–126 (KSRTN) are Cytoplasmic-facing. A helical membrane pass occupies residues 127-147 (MVLPFMIVFLLISSLLNFAHI). The Extracellular portion of the chain corresponds to 148–179 (AKILNDYKMKNDTVWDLNMYKSEYFIKQILLN). A glycan (N-linked (GlcNAc...) asparagine) is linked at N158. Residues 180-200 (LGVIFFFTLSLITCVFLIISL) form a helical membrane-spanning segment. The Cytoplasmic portion of the chain corresponds to 201 to 227 (WRHNRQMQSNVTGLRDSNTEAHVKAMK). The chain crosses the membrane as a helical span at residues 228–248 (VLISFXILFILYFIGMAIEIS). Topologically, residues 249–257 (CFTVRENKL) are extracellular. Residues 258 to 278 (LLMFGMTTTAIYPWGHSFILI) traverse the membrane as a helical segment. The Cytoplasmic portion of the chain corresponds to 279–307 (LGNSKLKQASLRVLQQLKCCEKRKNLRVT).

Belongs to the G-protein coupled receptor T2R family.

It localises to the membrane. Its function is as follows. Receptor that may play a role in the perception of bitterness and is gustducin-linked. May play a role in sensing the chemical composition of the gastrointestinal content. The activity of this receptor may stimulate alpha gustducin, mediate PLC-beta-2 activation and lead to the gating of TRPM5. The protein is Taste receptor type 2 member 10 (TAS2R10) of Gorilla gorilla gorilla (Western lowland gorilla).